A 327-amino-acid polypeptide reads, in one-letter code: Transaldolase (327 aa).

K132 serves as the catalytic Schiff-base intermediate with substrate.

It belongs to the transaldolase family. Type 1 subfamily.

The protein localises to the cytoplasm. It carries out the reaction D-sedoheptulose 7-phosphate + D-glyceraldehyde 3-phosphate = D-erythrose 4-phosphate + beta-D-fructose 6-phosphate. Its pathway is carbohydrate degradation; pentose phosphate pathway; D-glyceraldehyde 3-phosphate and beta-D-fructose 6-phosphate from D-ribose 5-phosphate and D-xylulose 5-phosphate (non-oxidative stage): step 2/3. Its function is as follows. Transaldolase is important for the balance of metabolites in the pentose-phosphate pathway. This chain is Transaldolase, found in Chlamydia muridarum (strain MoPn / Nigg).